The primary structure comprises 926 residues: MEQNIISTIRDECIRHRSKYLTIAQLTAIAEAKINEFIITGKAKDQDLSSLLDKCIDILSIYKKNSKDIKNIISCKNKGAMISSNSVMIIQLNYVYYKVIHIIVTTNIPHLSEFAKIKLHKSTSDEGNGNNNNNEFQLMNIYNTLLETLLKDENIAKIKSFIKSSIKQTKLNHEQEECNLMRTGSYITSNQLNSLISSSANSASSQMEILLIDIRSRLEFNKSHIDTKNIICLEPISFKMSYSDHDLEKKSLITSPNSEIKMFQSRNLFKFIILYTDANEYNVKQQSVLLDILVNHSFEKPISDDFTKIFILESGFPGWLKSNYGRQVSSSFPSNNNIKDDSVYINGNTSGLSLQHLPKMSPSIRHSMDDSMKEMLVAPTPLNHLQQQQQQQSDNDHVLKRSSSFKKLFSNYTSPNPKNSNSNLYSISSLSISSSPSPLPLHSPDPVKGNSLPINYPETPHLWKNSETDFMTNQREQLNHNSFAHIAPINTKAITSPSRTATPKLQRFPQTISMNLNMNSNGHSSATSTIQPSCLSLSNNDSLDHTDVTPTSSHNYDLDFAVGLENLGNSCYMNCIIQCILGTHELTQIFLDDSYAKHININSKLGSKGILAKYFARLVHMMYKEQVDGSKKISISPIKFKLACGSVNSLFKTASQQDCQEFCQFLLDGLHEDLNQCGSNPPLKELSQEAEARREKLSLRIASSIEWERFLTTDFSVIVDLFQGQYASRLKCKVCSHTSTTYQPFTVLSIPIPKKNSRNNITIEDCFREFTKCENLEVDEQWLCPHCEKRQPSTKQLTITRLPRNLIVHLKRFDNLLNKNNDFVIYPFLLDLTPFWANDFDGVFPPGVNDDELPIRGQIPPFKYELYGVACHFGTLYGGHYTAYVKKGLKKGWLYFDDTKYKPVKNKADAINSNAYVLFYHRVYGV.

The 124-residue stretch at 205-328 (SQMEILLIDI…WLKSNYGRQV (124 aa)) folds into the Rhodanese domain. Position 443 is a phosphoserine (Ser-443). Positions 562–923 (VGLENLGNSC…NAYVLFYHRV (362 aa)) constitute a USP domain. Catalysis depends on Cys-571, which acts as the Nucleophile. Catalysis depends on His-880, which acts as the Proton acceptor.

Belongs to the peptidase C19 family. In terms of assembly, interacts with BRO1, RFU1 and VPS32. Associates with the 26S proteasome.

The protein localises to the cytoplasm. The protein resides in the late endosome membrane. The enzyme catalyses Thiol-dependent hydrolysis of ester, thioester, amide, peptide and isopeptide bonds formed by the C-terminal Gly of ubiquitin (a 76-residue protein attached to proteins as an intracellular targeting signal).. RFU1 is an inhibitor of deubiquitination activity. Ubiquitin thioesterase that acts at the late endosome/prevacuolar compartment to recover ubiquitin from ubiquitinated membrane proteins en route to the vacuole. Also removes ubiquitin from soluble proteins targeted to proteasomes. Is essential to maintain a normal level of free ubiquitin. Involved in the ammonium-induced down-regulation of the GAP1 permease and the UME3 destruction in response to oxidative stress. Has a role in the RAD9 checkpoint response to TOP1 poisons. Required for promoting coordination of DNA replication and avoids DNA overreplication. In Saccharomyces cerevisiae (strain ATCC 204508 / S288c) (Baker's yeast), this protein is Ubiquitin carboxyl-terminal hydrolase 4 (DOA4).